The chain runs to 390 residues: Methionyl-tRNA formyltransferase, mitochondrial (390 aa).

A mitochondrion-targeting transit peptide spans 1 to 33 (MRVLLRCCCGHLPVGGGAGRRSNPRWRALARLS).

It belongs to the Fmt family.

The protein localises to the mitochondrion. It carries out the reaction L-methionyl-tRNA(fMet) + (6R)-10-formyltetrahydrofolate = N-formyl-L-methionyl-tRNA(fMet) + (6S)-5,6,7,8-tetrahydrofolate + H(+). Functionally, methionyl-tRNA formyltransferase that formylates methionyl-tRNA in mitochondria and is crucial for translation initiation. The protein is Methionyl-tRNA formyltransferase, mitochondrial (MTFMT) of Bos taurus (Bovine).